The following is a 175-amino-acid chain: Bifunctional protein PyrR (175 aa).

Residues 40-41 (TR), 102-110 (DDVLYTGRT), Arg135, and Val159 each bind substrate. A PRPP-binding motif is present at residues 98 to 110 (VIIIDDVLYTGRT).

Belongs to the purine/pyrimidine phosphoribosyltransferase family. PyrR subfamily. As to quaternary structure, homodimer and homohexamer; in equilibrium.

The enzyme catalyses UMP + diphosphate = 5-phospho-alpha-D-ribose 1-diphosphate + uracil. Its function is as follows. Regulates transcriptional attenuation of the pyrimidine nucleotide (pyr) operon by binding in a uridine-dependent manner to specific sites on pyr mRNA. This disrupts an antiterminator hairpin in the RNA and favors formation of a downstream transcription terminator, leading to a reduced expression of downstream genes. Functionally, also displays a weak uracil phosphoribosyltransferase activity which is not physiologically significant. This chain is Bifunctional protein PyrR, found in Staphylococcus aureus (strain MSSA476).